Here is a 187-residue protein sequence, read N- to C-terminus: Ribosome maturation factor RimM (187 aa).

A compositionally biased stretch (polar residues) spans 1-17; it reads MTSTPSPSTADPNSTND. The tract at residues 1–21 is disordered; the sequence is MTSTPSPSTADPNSTNDWLPV. Residues 111 to 184 enclose the PRC barrel domain; it reads EGEFHLLDLV…WLLLTPPPGL (74 aa).

The protein belongs to the RimM family. Binds ribosomal protein uS19.

The protein localises to the cytoplasm. In terms of biological role, an accessory protein needed during the final step in the assembly of 30S ribosomal subunit, possibly for assembly of the head region. Essential for efficient processing of 16S rRNA. May be needed both before and after RbfA during the maturation of 16S rRNA. It has affinity for free ribosomal 30S subunits but not for 70S ribosomes. The chain is Ribosome maturation factor RimM from Synechococcus sp. (strain CC9311).